The following is a 552-amino-acid chain: Two-component response regulator ARR10 (552 aa).

The region spanning Arg-18–Val-133 is the Response regulatory domain. Asp-69 carries the post-translational modification 4-aspartylphosphate. Residues Lys-139–Gln-181 form a disordered region. A coiled-coil region spans residues Asn-151 to Asn-173. The span at Tyr-163–Asp-177 shows a compositional bias: acidic residues. A Nuclear localization signal motif is present at residues Lys-182–Arg-185. The segment at residues Arg-185–Arg-235 is a DNA-binding region (myb-like GARP).

It belongs to the ARR family. Type-B subfamily. In terms of assembly, binds the target DNA as a monomer. Two-component system major event consists of a His-to-Asp phosphorelay between a sensor histidine kinase (HK) and a response regulator (RR). In plants, the His-to-Asp phosphorelay involves an additional intermediate named Histidine-containing phosphotransfer protein (HPt). This multistep phosphorelay consists of a His-Asp-His-Asp sequential transfer of a phosphate group between first a His and an Asp of the HK protein, followed by the transfer to a conserved His of the HPt protein and finally the transfer to an Asp in the receiver domain of the RR protein. In terms of tissue distribution, detected in the whole plant. Predominantly expressed in roots and leaves.

It is found in the nucleus. Its function is as follows. Transcriptional activator that binds specifically to the DNA sequence 5'-[AG]GATT-3'. Functions as a response regulator involved in His-to-Asp phosphorelay signal transduction system. Phosphorylation of the Asp residue in the receiver domain activates the ability of the protein to promote the transcription of target genes. Could directly activate some type-A response regulators in response to cytokinins. This is Two-component response regulator ARR10 (ARR10) from Arabidopsis thaliana (Mouse-ear cress).